A 419-amino-acid polypeptide reads, in one-letter code: Ribosome biogenesis protein WDR12 homolog (419 aa).

A ubiquitin-like (UBL) domain region spans residues 10-91 (VQVHLKTKQE…EDAIEIEYVE (82 aa)). 7 WD repeats span residues 103-141 (LHDDWVSAVKASGKWILTGCYDNTLNIWTNKGKHILTIP), 142-184 (GHTA…NTVE), 191-230 (GHERGVDSVSVSPDGQRFATGSWDTMLKVWSAELEDAGEG), 249-287 (GHRESISAVQWMDASTLLTGSWDHTLKVWDLSLEGIKAE), 289-328 (STNKSIFDASYSKLNHLILTASADKNLRLYDSRTNQGSVV), 334-374 (GHNA…APLY), and 378-416 (GHGEKVLDIDWTNPKYIVSGGSDNTVRVFKSRKALVENM).

It belongs to the WD repeat WDR12/YTM1 family.

Its subcellular location is the nucleus. The protein resides in the nucleolus. The protein localises to the nucleoplasm. Required for maturation of ribosomal RNAs and formation of the large ribosomal subunit. The chain is Ribosome biogenesis protein WDR12 homolog from Drosophila persimilis (Fruit fly).